The sequence spans 405 residues: Tryptophan synthase beta chain (405 aa).

Lys-98 is modified (N6-(pyridoxal phosphate)lysine).

It belongs to the TrpB family. As to quaternary structure, tetramer of two alpha and two beta chains. It depends on pyridoxal 5'-phosphate as a cofactor.

It catalyses the reaction (1S,2R)-1-C-(indol-3-yl)glycerol 3-phosphate + L-serine = D-glyceraldehyde 3-phosphate + L-tryptophan + H2O. Its pathway is amino-acid biosynthesis; L-tryptophan biosynthesis; L-tryptophan from chorismate: step 5/5. Its function is as follows. The beta subunit is responsible for the synthesis of L-tryptophan from indole and L-serine. The sequence is that of Tryptophan synthase beta chain from Xanthomonas campestris pv. campestris (strain 8004).